The sequence spans 353 residues: Protein MGF 360-11L (353 aa).

Belongs to the asfivirus MGF 360 family. As to quaternary structure, interacts with host TBK1 ad IRF7.

Functionally, plays a role in virus cell tropism, and may be required for efficient virus replication in macrophages. In addition, inhibits the phosphorylation of host TBK1 and IRF7 and thereby negatively regulates the host cGAS signaling pathway and antagonizes IFN-mediated antiviral activity. This is Protein MGF 360-11L from African swine fever virus (isolate Tick/South Africa/Pretoriuskop Pr4/1996) (ASFV).